We begin with the raw amino-acid sequence, 72 residues long: Translation initiation factor IF-1 (72 aa).

Residues 1–72 (MAKEELLEFP…TKGRINYRFK (72 aa)) enclose the S1-like domain.

It belongs to the IF-1 family. In terms of assembly, component of the 30S ribosomal translation pre-initiation complex which assembles on the 30S ribosome in the order IF-2 and IF-3, IF-1 and N-formylmethionyl-tRNA(fMet); mRNA recruitment can occur at any time during PIC assembly.

The protein localises to the cytoplasm. Its function is as follows. One of the essential components for the initiation of protein synthesis. Stabilizes the binding of IF-2 and IF-3 on the 30S subunit to which N-formylmethionyl-tRNA(fMet) subsequently binds. Helps modulate mRNA selection, yielding the 30S pre-initiation complex (PIC). Upon addition of the 50S ribosomal subunit IF-1, IF-2 and IF-3 are released leaving the mature 70S translation initiation complex. The chain is Translation initiation factor IF-1 from Dinoroseobacter shibae (strain DSM 16493 / NCIMB 14021 / DFL 12).